A 272-amino-acid polypeptide reads, in one-letter code: uncharacterized protein (272 aa).

2 helical membrane passes run 9-29 (GGDI…ASEH) and 252-272 (SHIS…ISFI).

It localises to the membrane. This is an uncharacterized protein from Caenorhabditis elegans.